We begin with the raw amino-acid sequence, 532 residues long: MEKSGETNGYLDGTQAEPAAGPRTPETAMGKSQRCASFFRRHALVLLTVSGVLVGAGMGAALRGLQLTRTQITYLAFPGEMLLRMLRMIILPLVVCSLVSGAASLDASSLGRLGGIAVAYFGLTTLSASALAVALAFIIKPGAGAQTLQSSSLGLENSGPPPVSKETVDSFLDLLRNLFPSNLVVAAFTTSATDYTVVTHNTSSGNVTKEKIPVVTDVEGMNILGLVLFALVLGVALKKLGPEGEDLIRFFNSFNEATMVLVSWIMWYVPIGIMFLIGSKIVEMKDIVMLVTSLGKYIFASMLGHVIHGGIVLPLVYFAFTRKNPFTFLLGLLTPFATAFATCSSSATLPSMMKCIEENNGVDKRISRFILPIGATVNMDGAAIFQCVAAVFIAQLNNVDLNAGQIFTILVTATASSVGAAGVPAGGVLTIAIILEAIGLPTHDLSLILAVDWIVDRTTTVVNVEGDALGAGILNHLNQKVVKKGEQELQEVKVEAIPNSKSEEETSPLVTHQNPAGPVAIAPELESKESVL.

Met-1 bears the N-acetylmethionine mark. Residues 1–29 (MEKSGETNGYLDGTQAEPAAGPRTPETAM) are disordered. The Cytoplasmic segment spans residues 1 to 41 (MEKSGETNGYLDGTQAEPAAGPRTPETAMGKSQRCASFFRR). Helical transmembrane passes span 42 to 62 (HALV…GAAL), 88 to 108 (MIIL…LDAS), and 119 to 139 (AYFG…AFII). Over 140-216 (KPGAGAQTLQ…VTKEKIPVVT (77 aa)) the chain is Extracellular. N-linked (GlcNAc...) asparagine glycans are attached at residues Asn-201 and Asn-206. The next 6 membrane-spanning stretches (helical) occupy residues 217 to 237 (DVEG…GVAL), 257 to 277 (ATMV…MFLI), 298 to 318 (IFAS…LVYF), 328 to 348 (FLLG…SSAT), 373 to 393 (IGAT…AVFI), and 418 to 438 (VGAA…LEAI). The segment at 495-532 (EAIPNSKSEEETSPLVTHQNPAGPVAIAPELESKESVL) is disordered. Residues Ser-507, Ser-527, and Ser-530 each carry the phosphoserine modification.

Belongs to the dicarboxylate/amino acid:cation symporter (DAACS) (TC 2.A.23) family. SLC1A4 subfamily.

The protein resides in the membrane. The protein localises to the melanosome. The catalysed reaction is L-threonine(in) + Na(+)(in) = L-threonine(out) + Na(+)(out). The enzyme catalyses L-serine(in) + Na(+)(in) = L-serine(out) + Na(+)(out). It catalyses the reaction L-cysteine(in) + Na(+)(in) = L-cysteine(out) + Na(+)(out). It carries out the reaction L-alanine(in) + Na(+)(in) = L-alanine(out) + Na(+)(out). The catalysed reaction is L-proline(in) + Na(+)(in) = L-proline(out) + Na(+)(out). The enzyme catalyses 4-hydroxy-L-proline(in) + Na(+)(in) = 4-hydroxy-L-proline(out) + Na(+)(out). Functionally, sodium-dependent neutral amino-acid transporter that mediates transport of alanine, serine, cysteine, proline, hydroxyproline and threonine. This chain is Neutral amino acid transporter A (Slc1a4), found in Mus musculus (Mouse).